A 141-amino-acid polypeptide reads, in one-letter code: uncharacterized protein (141 aa).

A run of 2 helical transmembrane segments spans residues L41–F61 and I95–F115.

The protein localises to the cell membrane. This is an uncharacterized protein from Rickettsia prowazekii (strain Madrid E).